Here is a 209-residue protein sequence, read N- to C-terminus: MYDPVSTAMNLVPMVVEQTSRGERAFDIFSRLLKERIIFLTGPVEDGMASLICAQLLFLESENPKKEIAMYINSPGGVVTAGLAIYDTMQYIKSPVSTVCMGMAASMGSLLLAAGAAGQRISLPNARIMVHQPSGGFRGQASDIERHAEDIIKTKRRLNEIYVKHCGRTYEEVERTLDRDHFMSADEAKAWGLVDHVYDSRDAAEAGAE.

Serine 106 (nucleophile) is an active-site residue. Histidine 131 is a catalytic residue.

The protein belongs to the peptidase S14 family. In terms of assembly, fourteen ClpP subunits assemble into 2 heptameric rings which stack back to back to give a disk-like structure with a central cavity, resembling the structure of eukaryotic proteasomes.

It localises to the cytoplasm. It carries out the reaction Hydrolysis of proteins to small peptides in the presence of ATP and magnesium. alpha-casein is the usual test substrate. In the absence of ATP, only oligopeptides shorter than five residues are hydrolyzed (such as succinyl-Leu-Tyr-|-NHMec, and Leu-Tyr-Leu-|-Tyr-Trp, in which cleavage of the -Tyr-|-Leu- and -Tyr-|-Trp bonds also occurs).. In terms of biological role, cleaves peptides in various proteins in a process that requires ATP hydrolysis. Has a chymotrypsin-like activity. Plays a major role in the degradation of misfolded proteins. In Caulobacter vibrioides (strain ATCC 19089 / CIP 103742 / CB 15) (Caulobacter crescentus), this protein is ATP-dependent Clp protease proteolytic subunit.